The sequence spans 724 residues: MTMFNKVVKEFQWGGHKVRMETGEIARQASGAVLLDMDDTVVLATVVGAKNPKPGQDFFPLTVDYLEKTYAAGKIPGGFFKREGRPSENETLTSRLIDRPLRPLFPEGFYNEVQVVIHVLSINPEVPADIPALVAASAALAVSGLPFNGPVGAARVGYKDGQYLLNPNRAQLAHSDLDLVVAGTERAVLMVESEAQQLSEEIMLGAVVYGHEQMQIAINAIHDLVRDGGKPEWDWQAAPKNEALVAKVSELGLADLQAAYQLRQKSARSQKLKEVYKSVAAKLAEAGVEADGVEVDNILFELESKIVRGQILNGEPRIDGRDTRTVRPIEIRSSVLPRAHGSSLFTRGETQALVVAALGTKSDEQIIDALQGEYRDRFMLHYNMPPFATGETGRVGSPKRREVGHGRLAKRALIPVLPPADEFGYTIRLVSEITESNGSSSMASVCGGSLALMDAGVPIKAHVAGVAMGLILEDNKFAVLTDILGDEDHLGDMDFKVAGTDAGITALQMDIKVQGITKEIMQVALAQAKEGRLHILGKMQAAMGGARTELSEHAPRMITVKINPEKIRDVIGKGGSTIQALTKETGCTIDIGEDGTITIASTSSEGMAEAKRRIEGITAEAEVGKIYNGTVLKLLDFGAIVNILPGKDGLLHISEIANERVNQVSDYVKEGQAVRVKLLSTDEKGRMRLSIKAAKAEEGDVPVAAPQAPGAGDAASQQQQQQQQ.

The Mg(2+) site is built by aspartate 488 and aspartate 494. The KH domain occupies 555 to 614 (PRMITVKINPEKIRDVIGKGGSTIQALTKETGCTIDIGEDGTITIASTSSEGMAEAKRRI). In terms of domain architecture, S1 motif spans 624-692 (GKIYNGTVLK…EKGRMRLSIK (69 aa)). Residues 697-724 (EEGDVPVAAPQAPGAGDAASQQQQQQQQ) form a disordered region. Over residues 701–724 (VPVAAPQAPGAGDAASQQQQQQQQ) the composition is skewed to low complexity.

This sequence belongs to the polyribonucleotide nucleotidyltransferase family. It depends on Mg(2+) as a cofactor.

It localises to the cytoplasm. The catalysed reaction is RNA(n+1) + phosphate = RNA(n) + a ribonucleoside 5'-diphosphate. Involved in mRNA degradation. Catalyzes the phosphorolysis of single-stranded polyribonucleotides processively in the 3'- to 5'-direction. This chain is Polyribonucleotide nucleotidyltransferase, found in Ralstonia pickettii (strain 12J).